Reading from the N-terminus, the 119-residue chain is Large ribosomal subunit protein bL20 (119 aa).

Belongs to the bacterial ribosomal protein bL20 family.

Its function is as follows. Binds directly to 23S ribosomal RNA and is necessary for the in vitro assembly process of the 50S ribosomal subunit. It is not involved in the protein synthesizing functions of that subunit. The sequence is that of Large ribosomal subunit protein bL20 from Ruthia magnifica subsp. Calyptogena magnifica.